The sequence spans 512 residues: MESVIFSINGEIIQVNKEIITASPYNFFKRIQDHHLKDEAIILNGINYHAFESLLDYMRWKKINITINNVEMILVAAIIIDVPPVVDLCVKTMIHNINSTNCIRMFNFSKRYGIKKLYNASMSEIINNITAVTSDPEFGKLSKDELTTILSHEDVNVNHEDVTAMILLKWIHKNPNDVDIINILHPKFITNTMRNAISLLGLTISKSTKPVTRNGIKHNIVVIKNSDYISTITHYSPRTEYWTIVGNTDRQFYNANVLHNCLYIIGGMINNRHVYSVSRVDLETKKWKTVTNMSSLKSEVSTCVNNGKLYVIGGLEFSISTGVAEYLKHGTSKWIRLPNLITPRYSGASVFVNDDIYVMGGVYTTYEKYVVLNDVECFTKNRWIKKSPMPRHHSIVYAVEYDGDIYVITGITHETRNYLYKYIVKEDKWIELYMYFNHVGKMFVCSCGDYILIIADAKYEYYPKSNTWNLFDMSTRNIEYYDMFTKDETPKCNVTHKSLPSFLSNCEKQFLQ.

One can recognise a BTB domain in the interval 2–67 (ESVIFSINGE…MRWKKINITI (66 aa)). One can recognise a BACK domain in the interval 102–176 (CIRMFNFSKR…LLKWIHKNPN (75 aa)). Kelch repeat units follow at residues 216–261 (IKHN…LHNC), 262–307 (LYII…VNNG), 309–354 (LYVI…FVND), 356–403 (IYVM…EYDG), 405–449 (IYVI…SCGD), and 452–498 (LIIA…THKS).

It belongs to the poxviruses Kelch family.

This Rabbitpox virus (strain Utrecht) (RPV) protein is Kelch repeat protein C2.